A 187-amino-acid chain; its full sequence is UPF0232 protein MMAR_0004 (187 aa).

2 disordered regions span residues 1-77 (MSDD…QPLG) and 166-187 (ASPS…DTYG). Over residues 14–30 (AARDELSGMDLVRRTLA) the composition is skewed to basic and acidic residues. The segment covering 31–55 (EARAAARARGQDPGRGFAAGPAPRR) has biased composition (low complexity).

This sequence belongs to the UPF0232 family.

The polypeptide is UPF0232 protein MMAR_0004 (Mycobacterium marinum (strain ATCC BAA-535 / M)).